Here is an 876-residue protein sequence, read N- to C-terminus: Alanine--tRNA ligase (876 aa).

4 residues coordinate Zn(2+): H568, H572, C670, and H674.

This sequence belongs to the class-II aminoacyl-tRNA synthetase family. It depends on Zn(2+) as a cofactor.

It is found in the cytoplasm. The catalysed reaction is tRNA(Ala) + L-alanine + ATP = L-alanyl-tRNA(Ala) + AMP + diphosphate. In terms of biological role, catalyzes the attachment of alanine to tRNA(Ala) in a two-step reaction: alanine is first activated by ATP to form Ala-AMP and then transferred to the acceptor end of tRNA(Ala). Also edits incorrectly charged Ser-tRNA(Ala) and Gly-tRNA(Ala) via its editing domain. In Geobacter metallireducens (strain ATCC 53774 / DSM 7210 / GS-15), this protein is Alanine--tRNA ligase.